The primary structure comprises 89 residues: Porphobilinogen deaminase (89 aa).

The protein belongs to the HMBS family. In terms of assembly, monomer. It depends on dipyrromethane as a cofactor.

The catalysed reaction is 4 porphobilinogen + H2O = hydroxymethylbilane + 4 NH4(+). Its pathway is porphyrin-containing compound metabolism; protoporphyrin-IX biosynthesis; coproporphyrinogen-III from 5-aminolevulinate: step 2/4. In terms of biological role, tetrapolymerization of the monopyrrole PBG into the hydroxymethylbilane pre-uroporphyrinogen in several discrete steps. This is Porphobilinogen deaminase (hemC) from Dickeya chrysanthemi (Pectobacterium chrysanthemi).